A 351-amino-acid chain; its full sequence is Protein-glutamate methylesterase/protein-glutamine glutaminase 1 (351 aa).

Residues 1-115 (MVDDSAVVRQ…KQFLTESADE (115 aa)) enclose the Response regulatory domain. Position 49 is a 4-aspartylphosphate (Asp49). Positions 161-351 (AQTTERIVAI…MAREIVTQLQ (191 aa)) constitute a CheB-type methylesterase domain. Catalysis depends on residues Ser173, His199, and Asp295.

The protein belongs to the CheB family. Phosphorylated by CheA. Phosphorylation of the N-terminal regulatory domain activates the methylesterase activity.

It is found in the cytoplasm. The enzyme catalyses [protein]-L-glutamate 5-O-methyl ester + H2O = L-glutamyl-[protein] + methanol + H(+). It catalyses the reaction L-glutaminyl-[protein] + H2O = L-glutamyl-[protein] + NH4(+). Functionally, involved in chemotaxis. Part of a chemotaxis signal transduction system that modulates chemotaxis in response to various stimuli. Catalyzes the demethylation of specific methylglutamate residues introduced into the chemoreceptors (methyl-accepting chemotaxis proteins or MCP) by CheR. Also mediates the irreversible deamidation of specific glutamine residues to glutamic acid. This is Protein-glutamate methylesterase/protein-glutamine glutaminase 1 from Xanthomonas oryzae pv. oryzae (strain MAFF 311018).